The chain runs to 1204 residues: Integrator complex subunit 2 (1204 aa).

Residues 428-444 (FVSLSFCMLLAFSTLVS) traverse the membrane as a helical segment.

The protein belongs to the Integrator subunit 2 family. As to quaternary structure, component of the Integrator complex, composed of core subunits INTS1, INTS2, INTS3, INTS4, INTS5, INTS6, INTS7, INTS8, INTS9/RC74, INTS10, INTS11/CPSF3L, INTS12, INTS13, INTS14 and INTS15. The core complex associates with protein phosphatase 2A subunits PPP2CA and PPP2R1A, to form the Integrator-PP2A (INTAC) complex.

It is found in the nucleus. The protein localises to the nucleus membrane. The protein resides in the cytoplasm. Component of the integrator complex, a multiprotein complex that terminates RNA polymerase II (Pol II) transcription in the promoter-proximal region of genes. The integrator complex provides a quality checkpoint during transcription elongation by driving premature transcription termination of transcripts that are unfavorably configured for transcriptional elongation: the complex terminates transcription by (1) catalyzing dephosphorylation of the C-terminal domain (CTD) of Pol II subunit POLR2A/RPB1 and SUPT5H/SPT5, (2) degrading the exiting nascent RNA transcript via endonuclease activity and (3) promoting the release of Pol II from bound DNA. The integrator complex is also involved in terminating the synthesis of non-coding Pol II transcripts, such as enhancer RNAs (eRNAs), small nuclear RNAs (snRNAs), telomerase RNAs and long non-coding RNAs (lncRNAs). Mediates recruitment of cytoplasmic dynein to the nuclear envelope, probably as component of the integrator complex. The polypeptide is Integrator complex subunit 2 (Homo sapiens (Human)).